The sequence spans 232 residues: Ribonuclease 3 (232 aa).

The RNase III domain occupies 5–134 (QTVLKNHFAI…FLGALLLDKD (130 aa)). Position 47 (Glu-47) interacts with Mg(2+). Asp-51 is a catalytic residue. Mg(2+)-binding residues include Asp-120 and Glu-123. Glu-123 is a catalytic residue. Residues 160–229 (DYKTHLQELL…AKNAVEKGLD (70 aa)) form the DRBM domain.

Belongs to the ribonuclease III family. As to quaternary structure, homodimer. Mg(2+) serves as cofactor.

The protein resides in the cytoplasm. The catalysed reaction is Endonucleolytic cleavage to 5'-phosphomonoester.. Digests double-stranded RNA. Involved in the processing of primary rRNA transcript to yield the immediate precursors to the large and small rRNAs (23S and 16S). Processes some mRNAs, and tRNAs when they are encoded in the rRNA operon. Processes pre-crRNA and tracrRNA of type II CRISPR loci if present in the organism. The chain is Ribonuclease 3 from Streptococcus pneumoniae (strain CGSP14).